Here is a 194-residue protein sequence, read N- to C-terminus: dITP/XTP pyrophosphatase (194 aa).

8–13 is a substrate binding site; that stretch reads TSNPGK. Residues glutamate 38 and aspartate 67 each coordinate Mg(2+). Aspartate 67 serves as the catalytic Proton acceptor. Substrate contacts are provided by residues serine 68, 152–155, lysine 175, and 180–181; these read FGYD and HR.

Belongs to the HAM1 NTPase family. As to quaternary structure, homodimer. The cofactor is Mg(2+).

The enzyme catalyses XTP + H2O = XMP + diphosphate + H(+). It carries out the reaction dITP + H2O = dIMP + diphosphate + H(+). The catalysed reaction is ITP + H2O = IMP + diphosphate + H(+). Functionally, pyrophosphatase that catalyzes the hydrolysis of nucleoside triphosphates to their monophosphate derivatives, with a high preference for the non-canonical purine nucleotides XTP (xanthosine triphosphate), dITP (deoxyinosine triphosphate) and ITP. Seems to function as a house-cleaning enzyme that removes non-canonical purine nucleotides from the nucleotide pool, thus preventing their incorporation into DNA/RNA and avoiding chromosomal lesions. The polypeptide is dITP/XTP pyrophosphatase (Legionella pneumophila (strain Paris)).